Consider the following 128-residue polypeptide: Lutropin subunit beta (128 aa).

Intrachain disulfides connect cysteine 18-cysteine 66, cysteine 32-cysteine 81, cysteine 35-cysteine 119, cysteine 43-cysteine 97, cysteine 47-cysteine 99, and cysteine 102-cysteine 109. N-linked (GlcNAc...) asparagine glycosylation occurs at asparagine 22.

This sequence belongs to the glycoprotein hormones subunit beta family. Heterodimer of a common alpha chain and a unique beta chain which confers biological specificity to thyrotropin, lutropin, follitropin and gonadotropin.

It is found in the secreted. In terms of biological role, promotes spermatogenesis and ovulation by stimulating the testes and ovaries to synthesize steroids. The polypeptide is Lutropin subunit beta (LHB) (Struthio camelus (Common ostrich)).